The chain runs to 179 residues: Outer-membrane lipoprotein carrier protein (179 aa).

A signal peptide spans 1–22 (MEVLRRYVLVFTSLCMTLFAWG).

This sequence belongs to the LolA family. As to quaternary structure, monomer.

It localises to the periplasm. In terms of biological role, participates in the translocation of lipoproteins from the inner membrane to the outer membrane. Only forms a complex with a lipoprotein if the residue after the N-terminal Cys is not an aspartate (The Asp acts as a targeting signal to indicate that the lipoprotein should stay in the inner membrane). The protein is Outer-membrane lipoprotein carrier protein of Helicobacter hepaticus (strain ATCC 51449 / 3B1).